The following is a 366-amino-acid chain: Ferrochelatase (366 aa).

Fe cation is bound by residues histidine 209 and glutamate 290.

The protein belongs to the ferrochelatase family.

The protein resides in the cytoplasm. It catalyses the reaction heme b + 2 H(+) = protoporphyrin IX + Fe(2+). It participates in porphyrin-containing compound metabolism; protoheme biosynthesis; protoheme from protoporphyrin-IX: step 1/1. Functionally, catalyzes the ferrous insertion into protoporphyrin IX. This chain is Ferrochelatase, found in Teredinibacter turnerae (strain ATCC 39867 / T7901).